The following is a 115-amino-acid chain: Large ribosomal subunit protein bL19 (115 aa).

Belongs to the bacterial ribosomal protein bL19 family.

This protein is located at the 30S-50S ribosomal subunit interface and may play a role in the structure and function of the aminoacyl-tRNA binding site. This chain is Large ribosomal subunit protein bL19, found in Oleidesulfovibrio alaskensis (strain ATCC BAA-1058 / DSM 17464 / G20) (Desulfovibrio alaskensis).